The chain runs to 1050 residues: Collagen alpha-2(I) chain (1050 aa).

The disordered stretch occupies residues 1 to 1050; it reads SGGFDFSFLP…FGYEGDFYRA (1050 aa). 4-hydroxyproline is present on residues Pro-10 and Pro-13. The span at 20–32 shows a compositional bias: gly residues; it reads RYYGVGLGPGPMG. Composition is skewed to low complexity over residues 33–46 and 56–77; these read LMGPRGPPGASGAP and EPGEPGQTGPAGARGPPGAPGK. 4-hydroxyproline is present on residues Pro-40 and Pro-46. The span at 78 to 92 shows a compositional bias: basic and acidic residues; it reads AGEDGHPGKPGRPGE. Lys-114 is modified (5-hydroxylysine; alternate). A glycan (O-linked (Gal...) hydroxylysine; alternate) is linked at Lys-114. Composition is skewed to low complexity over residues 161-190, 236-257, 298-311, 320-338, and 355-371; these read VGAPGPAGARGSDGSVGPVGPAGPIGSAGP, PGANGLTGAKGAAGLPGVAGAP, EPGSAGPQGPPGSS, NGESGSTGPTGPPGLRGNP, and PAGARGASGPAGVRGPS. 4-hydroxyproline occurs at positions 377 and 380. Composition is skewed to low complexity over residues 406-425 and 452-467; these read LPGIDGRPGPIGPAGARGEA and AGNRGAPGPDGNNGAQ. Gly residues predominate over residues 474–483; that stretch reads GVQGGKGEQG. Composition is skewed to low complexity over residues 530–547, 598–642, and 649–669; these read PGESGAVGPSGAIGSRGP, VGTT…PRGS, and VGPAGPNGFAGPAGAAGQPGA. The segment covering 670-679 has biased composition (basic and acidic residues); that stretch reads KGERGTKGPK. Positions 687-697 are enriched in low complexity; it reads PTGPVGSAGPA. The segment covering 707 to 716 has biased composition (gly residues); that stretch reads GSRGDGGPPG. Residues 718-727 show a composition bias toward low complexity; the sequence is TGFPGAAGRT. Residues 764 to 773 show a composition bias toward gly residues; the sequence is GETGAGGPPG. Low complexity-rich tracts occupy residues 781-808, 816-841, 881-903, and 911-926; these read SGEPGTAGPPGTAGPQGLLGAPGILGLP, LPGVAGAVGEPGPLGIAGPPGARGPS, YAGNAGPVGAAGAPGPHGTVGPA, and EPGPVGSVGPVGALGP. The segment covering 936–947 has biased composition (basic and acidic residues); the sequence is RGDKGEPGDKGP. Residues 1020–1032 are compositionally biased toward pro residues; sequence SGPPGPPGPPGPP.

Belongs to the fibrillar collagen family. Trimers of one alpha 2(I) and two alpha 1(I) chains. Interacts (via C-terminus) with TMEM131 (via PapD-L domain); the interaction is direct and is involved in assembly and TRAPPIII ER-to-Golgi transport complex-dependent secretion of collagen. Prolines at the third position of the tripeptide repeating unit (G-X-Y) are hydroxylated in some or all of the chains. Expressed in bones.

The protein resides in the secreted. The protein localises to the extracellular space. It localises to the extracellular matrix. In terms of biological role, type I collagen is a member of group I collagen (fibrillar forming collagen). The chain is Collagen alpha-2(I) chain from Megatherium americanum (Giant ground sloth).